The primary structure comprises 177 residues: Large ribosomal subunit protein uL6 (177 aa).

Belongs to the universal ribosomal protein uL6 family. In terms of assembly, part of the 50S ribosomal subunit.

This protein binds to the 23S rRNA, and is important in its secondary structure. It is located near the subunit interface in the base of the L7/L12 stalk, and near the tRNA binding site of the peptidyltransferase center. The polypeptide is Large ribosomal subunit protein uL6 (Azoarcus sp. (strain BH72)).